A 364-amino-acid polypeptide reads, in one-letter code: Chorismate synthase (364 aa).

NADP(+) contacts are provided by arginine 48 and arginine 54. FMN contacts are provided by residues 125–127 (RSS), 238–239 (NA), glycine 278, 293–297 (KPTSS), and arginine 319.

It belongs to the chorismate synthase family. Homotetramer. FMNH2 serves as cofactor.

The catalysed reaction is 5-O-(1-carboxyvinyl)-3-phosphoshikimate = chorismate + phosphate. The protein operates within metabolic intermediate biosynthesis; chorismate biosynthesis; chorismate from D-erythrose 4-phosphate and phosphoenolpyruvate: step 7/7. Functionally, catalyzes the anti-1,4-elimination of the C-3 phosphate and the C-6 proR hydrogen from 5-enolpyruvylshikimate-3-phosphate (EPSP) to yield chorismate, which is the branch point compound that serves as the starting substrate for the three terminal pathways of aromatic amino acid biosynthesis. This reaction introduces a second double bond into the aromatic ring system. The sequence is that of Chorismate synthase from Shewanella sediminis (strain HAW-EB3).